Consider the following 143-residue polypeptide: Ribonuclease P protein component (143 aa).

The interval 111-143 (RVKRKGGGPGGNRRSAPPGSAPLTDDGRLRGEP) is disordered.

It belongs to the RnpA family. In terms of assembly, consists of a catalytic RNA component (M1 or rnpB) and a protein subunit.

It carries out the reaction Endonucleolytic cleavage of RNA, removing 5'-extranucleotides from tRNA precursor.. Functionally, RNaseP catalyzes the removal of the 5'-leader sequence from pre-tRNA to produce the mature 5'-terminus. It can also cleave other RNA substrates such as 4.5S RNA. The protein component plays an auxiliary but essential role in vivo by binding to the 5'-leader sequence and broadening the substrate specificity of the ribozyme. The protein is Ribonuclease P protein component of Deinococcus geothermalis (strain DSM 11300 / CIP 105573 / AG-3a).